We begin with the raw amino-acid sequence, 477 residues long: Protein nucleotidyltransferase YdiU (477 aa).

ATP is bound by residues glycine 89, glycine 91, arginine 92, lysine 112, aspartate 124, glycine 125, arginine 178, and arginine 185. Aspartate 257 (proton acceptor) is an active-site residue. Positions 258 and 267 each coordinate Mg(2+). Residue aspartate 267 coordinates ATP.

It belongs to the SELO family. Mg(2+) is required as a cofactor. The cofactor is Mn(2+).

The enzyme catalyses L-seryl-[protein] + ATP = 3-O-(5'-adenylyl)-L-seryl-[protein] + diphosphate. It carries out the reaction L-threonyl-[protein] + ATP = 3-O-(5'-adenylyl)-L-threonyl-[protein] + diphosphate. It catalyses the reaction L-tyrosyl-[protein] + ATP = O-(5'-adenylyl)-L-tyrosyl-[protein] + diphosphate. The catalysed reaction is L-histidyl-[protein] + UTP = N(tele)-(5'-uridylyl)-L-histidyl-[protein] + diphosphate. The enzyme catalyses L-seryl-[protein] + UTP = O-(5'-uridylyl)-L-seryl-[protein] + diphosphate. It carries out the reaction L-tyrosyl-[protein] + UTP = O-(5'-uridylyl)-L-tyrosyl-[protein] + diphosphate. Its function is as follows. Nucleotidyltransferase involved in the post-translational modification of proteins. It can catalyze the addition of adenosine monophosphate (AMP) or uridine monophosphate (UMP) to a protein, resulting in modifications known as AMPylation and UMPylation. The chain is Protein nucleotidyltransferase YdiU from Synechocystis sp. (strain ATCC 27184 / PCC 6803 / Kazusa).